A 423-amino-acid chain; its full sequence is Protein MANNAN SYNTHESIS-RELATED 2 (423 aa).

The Cytoplasmic portion of the chain corresponds to 1–6 (MGVDLR). The chain crosses the membrane as a helical; Signal-anchor for type II membrane protein span at residues 7–26 (QVVAGILTITMFVMLGQMLH). The Lumenal segment spans residues 27 to 423 (RDYFDAVQEK…KNHLAYSCFC (397 aa)). 264-266 (DLR) lines the substrate pocket.

It belongs to the glycosyltransferase GT106 family. In terms of tissue distribution, widely expressed.

It is found in the golgi apparatus membrane. It functions in the pathway glycan biosynthesis. Glycosyltransferase involved in mannan biosynthesis. The polypeptide is Protein MANNAN SYNTHESIS-RELATED 2 (Arabidopsis thaliana (Mouse-ear cress)).